The sequence spans 754 residues: Protein tyrosine phosphatase domain-containing protein 1 (754 aa).

Residues 82 to 253 enclose the Tyrosine-protein phosphatase domain; sequence YSSWVTDNIL…LTPLRNIFSC (172 aa). Cysteine 190 functions as the Phosphocysteine intermediate in the catalytic mechanism. 2 positions are modified to phosphoserine: serine 392 and serine 394. Positions 487 to 498 are enriched in polar residues; the sequence is SGAFSADVSGSH. Positions 487-554 are disordered; sequence SGAFSADVSG…PRSPLDCGSS (68 aa). Serine 547 is subject to Phosphoserine.

This sequence belongs to the protein-tyrosine phosphatase family. Non-receptor class PTPDC1 subfamily.

Functionally, may play roles in cilia formation and/or maintenance. In Homo sapiens (Human), this protein is Protein tyrosine phosphatase domain-containing protein 1 (PTPDC1).